Consider the following 104-residue polypeptide: Naphthalene 1,2-dioxygenase system, ferredoxin component (104 aa).

A Rieske domain is found at 6–101; sequence IEAVALSDIL…VKIENLRVMI (96 aa). [2Fe-2S] cluster is bound by residues Cys45, His47, Cys64, and His67.

This sequence belongs to the bacterial ring-hydroxylating dioxygenase ferredoxin component family. As to quaternary structure, the naphthalene dioxygenase (NDO) multicomponent enzyme system is composed of an electron transfer component and a dioxygenase component (iron sulfur protein (ISP)). The electron transfer component is composed of a ferredoxin reductase (NdoR) and a ferredoxin (NdoA), and the dioxygenase component is formed of a heterohexamer (trimer of heterodimers) of three large alpha subunits (NdoB) and three small beta subunits (NdoC). Requires [2Fe-2S] cluster as cofactor.

It participates in aromatic compound metabolism; naphthalene degradation. Component of the naphthalene dioxygenase (NDO) multicomponent enzyme system which catalyzes the incorporation of both atoms of molecular oxygen into naphthalene to form cis-(1R,2S)-dihydroxy-1,2-dihydronaphthalene. Functions as an intermediate electron transfer protein via a specific interaction with iron sulfur protein components (ISP) (NdoB and NdoC). Also able to catalyze the cis-dihydroxylation of biphenyl and phenanthrene. In Pseudomonas putida (Arthrobacter siderocapsulatus), this protein is Naphthalene 1,2-dioxygenase system, ferredoxin component.